Reading from the N-terminus, the 132-residue chain is Small ribosomal subunit protein uS8 (132 aa).

It belongs to the universal ribosomal protein uS8 family. In terms of assembly, part of the 30S ribosomal subunit. Contacts proteins S5 and S12.

Its function is as follows. One of the primary rRNA binding proteins, it binds directly to 16S rRNA central domain where it helps coordinate assembly of the platform of the 30S subunit. The chain is Small ribosomal subunit protein uS8 from Staphylococcus saprophyticus subsp. saprophyticus (strain ATCC 15305 / DSM 20229 / NCIMB 8711 / NCTC 7292 / S-41).